The primary structure comprises 830 residues: Periplasmic nitrate reductase (830 aa).

The segment at residues 1–31 (MKLSRRDFMKANAAVAAAAAAGMTIPTVAKA) is a signal peptide (tat-type signal). The 4Fe-4S Mo/W bis-MGD-type domain maps to 39–95 (IKWDKAPCRFCGTGCGVLVGTQNGRIVASQGDPDSPVNRGLNCIKGYFLPKIMYGKD). Positions 46, 49, 53, and 81 each coordinate [4Fe-4S] cluster. Residues lysine 83, glutamine 150, asparagine 175, cysteine 179, 212–219 (WGSNMAEM), 243–247 (STYEH), 262–264 (QTD), methionine 372, glutamine 376, asparagine 482, 508–509 (SD), lysine 531, aspartate 558, and 718–727 (TGRVLEHWHT) each bind Mo-bis(molybdopterin guanine dinucleotide). Residue phenylalanine 794 participates in substrate binding. Mo-bis(molybdopterin guanine dinucleotide) is bound by residues asparagine 802 and lysine 819.

It belongs to the prokaryotic molybdopterin-containing oxidoreductase family. NasA/NapA/NarB subfamily. Component of the periplasmic nitrate reductase NapAB complex composed of NapA and NapB. The cofactor is [4Fe-4S] cluster. It depends on Mo-bis(molybdopterin guanine dinucleotide) as a cofactor. In terms of processing, predicted to be exported by the Tat system. The position of the signal peptide cleavage has not been experimentally proven.

The protein localises to the periplasm. It carries out the reaction 2 Fe(II)-[cytochrome] + nitrate + 2 H(+) = 2 Fe(III)-[cytochrome] + nitrite + H2O. Catalytic subunit of the periplasmic nitrate reductase complex NapAB. Receives electrons from NapB and catalyzes the reduction of nitrate to nitrite. This chain is Periplasmic nitrate reductase, found in Yersinia pseudotuberculosis serotype IB (strain PB1/+).